Reading from the N-terminus, the 506-residue chain is EPTC-inducible aldehyde dehydrogenase (506 aa).

219-225 (GFGVEAG) provides a ligand contact to NAD(+). Residues E263 and C302 contribute to the active site.

This sequence belongs to the aldehyde dehydrogenase family.

The catalysed reaction is an aldehyde + NAD(+) + H2O = a carboxylate + NADH + 2 H(+). Its function is as follows. Degrades all aldehydes potentially generated by N dealkylation of thiocarbamates and may also participate in ethanolamine metabolism and further assimilation of degradation products by thiocarbamate-induced cytochrome P-450. This is EPTC-inducible aldehyde dehydrogenase (thcA) from Rhodococcus erythropolis (Arthrobacter picolinophilus).